Here is a 60-residue protein sequence, read N- to C-terminus: UPF0434 protein KPN78578_09190 (60 aa).

Belongs to the UPF0434 family.

The sequence is that of UPF0434 protein KPN78578_09190 from Klebsiella pneumoniae subsp. pneumoniae (strain ATCC 700721 / MGH 78578).